The following is a 377-amino-acid chain: Transmembrane protein 237A (377 aa).

3 stretches are compositionally biased toward basic and acidic residues: residues M1–P11, L43–P64, and H74–N87. Residues M1 to E124 form a disordered region. Transmembrane regions (helical) follow at residues I198 to V218, L239 to F259, G273 to L293, and P326 to A346.

The protein belongs to the TMEM237 family.

It localises to the membrane. The protein resides in the cell projection. The protein localises to the cilium. Its function is as follows. Component of the transition zone in primary cilia. Required for ciliogenesis. This Danio rerio (Zebrafish) protein is Transmembrane protein 237A (tmem237a).